Consider the following 137-residue polypeptide: Phosphoribosyl-AMP cyclohydrolase (137 aa).

Residue aspartate 83 coordinates Mg(2+). Zn(2+) is bound at residue cysteine 84. 2 residues coordinate Mg(2+): aspartate 85 and aspartate 87. Zn(2+) is bound by residues cysteine 101 and cysteine 108.

It belongs to the PRA-CH family. As to quaternary structure, homodimer. Mg(2+) serves as cofactor. Zn(2+) is required as a cofactor.

Its subcellular location is the cytoplasm. The catalysed reaction is 1-(5-phospho-beta-D-ribosyl)-5'-AMP + H2O = 1-(5-phospho-beta-D-ribosyl)-5-[(5-phospho-beta-D-ribosylamino)methylideneamino]imidazole-4-carboxamide. Its pathway is amino-acid biosynthesis; L-histidine biosynthesis; L-histidine from 5-phospho-alpha-D-ribose 1-diphosphate: step 3/9. Functionally, catalyzes the hydrolysis of the adenine ring of phosphoribosyl-AMP. This is Phosphoribosyl-AMP cyclohydrolase from Burkholderia mallei (strain ATCC 23344).